Reading from the N-terminus, the 318-residue chain is Acetyl-coenzyme A carboxylase carboxyl transferase subunit alpha (318 aa).

Residues 34–295 (DIEDQISQLR…KQAIKKDLSE (262 aa)) enclose the CoA carboxyltransferase C-terminal domain.

The protein belongs to the AccA family. In terms of assembly, acetyl-CoA carboxylase is a heterohexamer composed of biotin carboxyl carrier protein (AccB), biotin carboxylase (AccC) and two subunits each of ACCase subunit alpha (AccA) and ACCase subunit beta (AccD).

Its subcellular location is the cytoplasm. It catalyses the reaction N(6)-carboxybiotinyl-L-lysyl-[protein] + acetyl-CoA = N(6)-biotinyl-L-lysyl-[protein] + malonyl-CoA. The protein operates within lipid metabolism; malonyl-CoA biosynthesis; malonyl-CoA from acetyl-CoA: step 1/1. In terms of biological role, component of the acetyl coenzyme A carboxylase (ACC) complex. First, biotin carboxylase catalyzes the carboxylation of biotin on its carrier protein (BCCP) and then the CO(2) group is transferred by the carboxyltransferase to acetyl-CoA to form malonyl-CoA. This chain is Acetyl-coenzyme A carboxylase carboxyl transferase subunit alpha, found in Colwellia psychrerythraea (strain 34H / ATCC BAA-681) (Vibrio psychroerythus).